Here is a 452-residue protein sequence, read N- to C-terminus: Bifunctional protein GlmU (452 aa).

A pyrophosphorylase region spans residues 1-226 (MNFSAVILAA…PIEVEGVNDR (226 aa)). UDP-N-acetyl-alpha-D-glucosamine is bound by residues 8-11 (LAAG), Lys22, Gln73, 78-79 (GT), 100-102 (YGD), Gly137, Glu151, Asn166, and Asn224. Asp102 provides a ligand contact to Mg(2+). Asn224 contacts Mg(2+). The tract at residues 227–247 (AQLARLERAYQAAQAQKLLEQ) is linker. The segment at 248 to 452 (GVMLRDPSRF…IANWQRPTKK (205 aa)) is N-acetyltransferase. Residues Arg330 and Lys348 each contribute to the UDP-N-acetyl-alpha-D-glucosamine site. His360 (proton acceptor) is an active-site residue. Tyr363 and Asn374 together coordinate UDP-N-acetyl-alpha-D-glucosamine. Residues Ala377, 383 to 384 (NY), Ser402, Ala420, and Arg437 each bind acetyl-CoA.

It in the N-terminal section; belongs to the N-acetylglucosamine-1-phosphate uridyltransferase family. This sequence in the C-terminal section; belongs to the transferase hexapeptide repeat family. In terms of assembly, homotrimer. The cofactor is Mg(2+).

Its subcellular location is the cytoplasm. The enzyme catalyses alpha-D-glucosamine 1-phosphate + acetyl-CoA = N-acetyl-alpha-D-glucosamine 1-phosphate + CoA + H(+). It catalyses the reaction N-acetyl-alpha-D-glucosamine 1-phosphate + UTP + H(+) = UDP-N-acetyl-alpha-D-glucosamine + diphosphate. Its pathway is nucleotide-sugar biosynthesis; UDP-N-acetyl-alpha-D-glucosamine biosynthesis; N-acetyl-alpha-D-glucosamine 1-phosphate from alpha-D-glucosamine 6-phosphate (route II): step 2/2. It participates in nucleotide-sugar biosynthesis; UDP-N-acetyl-alpha-D-glucosamine biosynthesis; UDP-N-acetyl-alpha-D-glucosamine from N-acetyl-alpha-D-glucosamine 1-phosphate: step 1/1. The protein operates within bacterial outer membrane biogenesis; LPS lipid A biosynthesis. Its function is as follows. Catalyzes the last two sequential reactions in the de novo biosynthetic pathway for UDP-N-acetylglucosamine (UDP-GlcNAc). The C-terminal domain catalyzes the transfer of acetyl group from acetyl coenzyme A to glucosamine-1-phosphate (GlcN-1-P) to produce N-acetylglucosamine-1-phosphate (GlcNAc-1-P), which is converted into UDP-GlcNAc by the transfer of uridine 5-monophosphate (from uridine 5-triphosphate), a reaction catalyzed by the N-terminal domain. The sequence is that of Bifunctional protein GlmU from Aliivibrio fischeri (strain MJ11) (Vibrio fischeri).